The following is a 210-amino-acid chain: Chaperone protein TorD (210 aa).

It belongs to the TorD/DmsD family. TorD subfamily.

It is found in the cytoplasm. Its function is as follows. Involved in the biogenesis of TorA. Acts on TorA before the insertion of the molybdenum cofactor and, as a result, probably favors a conformation of the apoenzyme that is competent for acquiring the cofactor. The chain is Chaperone protein TorD from Salmonella arizonae (strain ATCC BAA-731 / CDC346-86 / RSK2980).